A 160-amino-acid polypeptide reads, in one-letter code: Ureidoglycolate lyase (160 aa).

It belongs to the ureidoglycolate lyase family. As to quaternary structure, homodimer. Ni(2+) serves as cofactor.

The catalysed reaction is (S)-ureidoglycolate = urea + glyoxylate. It participates in nitrogen metabolism; (S)-allantoin degradation. Catalyzes the catabolism of the allantoin degradation intermediate (S)-ureidoglycolate, generating urea and glyoxylate. Involved in the anaerobic utilization of allantoin as sole nitrogen source. Reinforces the induction of genes involved in the degradation of allantoin and glyoxylate by producing glyoxylate. This Escherichia coli O139:H28 (strain E24377A / ETEC) protein is Ureidoglycolate lyase.